A 163-amino-acid polypeptide reads, in one-letter code: NADH-quinone oxidoreductase subunit I (163 aa).

4Fe-4S ferredoxin-type domains lie at 53-83 (LRRY…IEAG) and 94-123 (VRYD…EGPN). Residues Cys-63, Cys-66, Cys-69, Cys-73, Cys-103, Cys-106, Cys-109, and Cys-113 each coordinate [4Fe-4S] cluster.

The protein belongs to the complex I 23 kDa subunit family. NDH-1 is composed of 14 different subunits. Subunits NuoA, H, J, K, L, M, N constitute the membrane sector of the complex. [4Fe-4S] cluster is required as a cofactor.

Its subcellular location is the cell inner membrane. The catalysed reaction is a quinone + NADH + 5 H(+)(in) = a quinol + NAD(+) + 4 H(+)(out). In terms of biological role, NDH-1 shuttles electrons from NADH, via FMN and iron-sulfur (Fe-S) centers, to quinones in the respiratory chain. The immediate electron acceptor for the enzyme in this species is believed to be ubiquinone. Couples the redox reaction to proton translocation (for every two electrons transferred, four hydrogen ions are translocated across the cytoplasmic membrane), and thus conserves the redox energy in a proton gradient. This Bartonella henselae (strain ATCC 49882 / DSM 28221 / CCUG 30454 / Houston 1) (Rochalimaea henselae) protein is NADH-quinone oxidoreductase subunit I.